A 238-amino-acid chain; its full sequence is uncharacterized protein (238 aa).

This sequence belongs to the chlamydial CPn_0658/CT_538/TC_0825 family.

This is an uncharacterized protein from Chlamydia trachomatis serovar D (strain ATCC VR-885 / DSM 19411 / UW-3/Cx).